We begin with the raw amino-acid sequence, 41 residues long: MPRSPSKSSPKKGSPRKASPKRGGKGAKRAGKGGRRRTVVK.

Positions 1-41 (MPRSPSKSSPKKGSPRKASPKRGGKGAKRAGKGGRRRTVVK) are disordered. Short sequence motifs (SPKK motif) lie at residues 4–7 (SPSK), 9–12 (SPKK), 14–17 (SPRK), and 19–22 (SPKR). Over residues 9 to 41 (SPKKGSPRKASPKRGGKGAKRAGKGGRRRTVVK) the composition is skewed to basic residues. Phosphoserine is present on residues Ser14 and Ser19.

It belongs to the histone H2B family. In terms of assembly, the nucleosome is a histone octamer containing two molecules each of H2A, H2B, H3 and H4 assembled in one H3-H4 heterotetramer and two H2A-H2B heterodimers. The octamer wraps approximately 147 bp of DNA. In terms of processing, monoubiquitination gives a specific tag for epigenetic transcriptional activation and is also prerequisite for histone H3 'Lys-4' and 'Lys-79' methylation. Post-translationally, phosphorylated on SPKK motifs 3 and 4; which may regulate DNA binding. Dephosphorylated during maturation of spermatids to mature sperm and rephosphorylated at fertilization.

Its subcellular location is the nucleus. The protein resides in the chromosome. Its function is as follows. Core component of nucleosome. Nucleosomes wrap and compact DNA into chromatin, limiting DNA accessibility to the cellular machineries which require DNA as a template. Histones thereby play a central role in transcription regulation, DNA repair, DNA replication and chromosomal stability. DNA accessibility is regulated via a complex set of post-translational modifications of histones, also called histone code, and nucleosome remodeling. This chain is Histone H2B.3, sperm, found in Echinus esculentus (Sea urchin).